Reading from the N-terminus, the 250-residue chain is MPNDNRLAPAALAAQAAALPAAWRHVLEQPAVARAFASVLGHVEQRLAEGAVVYPATPFRALDQLAPADVRVVILGQDPYHGPGQAQGLAFSVPDDCKCPPSLRNIFNEIAVDYPRPTRHDLSAWTRQGVLLLNTSLTVEDGQPGSHAKRGWETVTDALIAEVARDPSPKVFLLWGAHAQAKQALVPADAGHLVLAANHPSPLSARRPPVPFVGCGHFRQTNAWLQQRGQKPVDWSGEQNNASRQGEFAL.

Asp78 (proton acceptor) is an active-site residue. The tract at residues 228-250 is disordered; that stretch reads RGQKPVDWSGEQNNASRQGEFAL.

It belongs to the uracil-DNA glycosylase (UDG) superfamily. UNG family.

The protein resides in the cytoplasm. The catalysed reaction is Hydrolyzes single-stranded DNA or mismatched double-stranded DNA and polynucleotides, releasing free uracil.. In terms of biological role, excises uracil residues from the DNA which can arise as a result of misincorporation of dUMP residues by DNA polymerase or due to deamination of cytosine. The polypeptide is Uracil-DNA glycosylase (Bordetella parapertussis (strain 12822 / ATCC BAA-587 / NCTC 13253)).